Reading from the N-terminus, the 195-residue chain is 3-isopropylmalate dehydratase small subunit (195 aa).

The protein belongs to the LeuD family. LeuD type 1 subfamily. Heterodimer of LeuC and LeuD.

It carries out the reaction (2R,3S)-3-isopropylmalate = (2S)-2-isopropylmalate. Its pathway is amino-acid biosynthesis; L-leucine biosynthesis; L-leucine from 3-methyl-2-oxobutanoate: step 2/4. In terms of biological role, catalyzes the isomerization between 2-isopropylmalate and 3-isopropylmalate, via the formation of 2-isopropylmaleate. The protein is 3-isopropylmalate dehydratase small subunit of Parafrankia sp. (strain EAN1pec).